A 210-amino-acid chain; its full sequence is MNASQVAGEEAPQSGHSVKVVLVGDGGCGKTSLMMVFAKGAFPESYSPTVFERYNATLQMKGKPVHLQIWDTAGQDDYDRLRPLFYPDANVLLLCFDVTNPNSFDNVSNRWYPEVTHFCKGVPIIVVGCKIDLRKDKVLVNNLRKKRLEPVTYHRGHDMARSVGAVAYLECSARLHDNVEAVFQEAAEVALSSRRHNFWRRITQNCCLAT.

24-31 (GDGGCGKT) provides a ligand contact to GTP. Residues 46 to 54 (YSPTVFERY) carry the Effector region motif. GTP-binding positions include 71 to 75 (DTAGQ) and 129 to 132 (CKID). A Cysteine methyl ester modification is found at Cys-207. Cys-207 carries S-geranylgeranyl cysteine lipidation. Residues 208–210 (LAT) constitute a propeptide, removed in mature form.

Belongs to the small GTPase superfamily. Rho family. In terms of assembly, interacts with PAK5. Interacts (in GTP-bound form) with DAPK3, FILIP1 and WHAMM. Interacts (independent of GTP-loaded status) with ANKFY1. Widely expressed.

The protein localises to the cell membrane. Its subcellular location is the early endosome. In terms of biological role, involved in endosome dynamics. May coordinate membrane transport with the function of the cytoskeleton. Involved in the internalization and trafficking of activated tyrosine kinase receptors such as PDGFRB. Participates in the reorganization of actin cytoskeleton; the function seems to involve WHAMM and includes regulation of filopodia formation and actin filament bundling. Can modulate the effect of DAPK3 in reorganization of actin cytoskeleton and focal adhesion dissolution. The sequence is that of Rho-related GTP-binding protein RhoD (Rhod) from Mus musculus (Mouse).